Here is a 175-residue protein sequence, read N- to C-terminus: Protein MODIFYING WALL LIGNIN-1 (175 aa).

A signal peptide spans 1 to 24 (MFIFLFGLAAFFLCLSAEFQKAKA). The Cytoplasmic portion of the chain corresponds to 25–52 (LLRAQVFLKGKDLKWDGESCYLPENRAF). Residues 53 to 73 (GLGIAALVCVSVAQIVGNVVI) form a helical membrane-spanning segment. Residues 74–86 (CRGFTKTDKTRTT) lie on the Extracellular side of the membrane. A helical transmembrane segment spans residues 87–107 (IFCIILLLFSWVNFAVAVTLI). Residues 108 to 135 (SVGASMNREQIYGKGWLNRECYLVKDGV) are Cytoplasmic-facing. A helical transmembrane segment spans residues 136-156 (FAASGFLSVTTMAAILGAFAF). Over 157–175 (KVKPSLQVENHDKRHTQNV) the chain is Extracellular.

Belongs to the DESIGUAL family. As to quaternary structure, interacts with CRK19.

The protein localises to the cell membrane. Together with MWL2, contributes to secondary cell wall biology, specifically lignin biosynthesis. In Arabidopsis thaliana (Mouse-ear cress), this protein is Protein MODIFYING WALL LIGNIN-1.